The chain runs to 141 residues: Nucleoside diphosphate kinase (141 aa).

ATP contacts are provided by K11, F59, R87, T93, R104, and N114. H117 functions as the Pros-phosphohistidine intermediate in the catalytic mechanism.

This sequence belongs to the NDK family. As to quaternary structure, homotetramer. Mg(2+) is required as a cofactor.

It is found in the cytoplasm. It catalyses the reaction a 2'-deoxyribonucleoside 5'-diphosphate + ATP = a 2'-deoxyribonucleoside 5'-triphosphate + ADP. The enzyme catalyses a ribonucleoside 5'-diphosphate + ATP = a ribonucleoside 5'-triphosphate + ADP. Its function is as follows. Major role in the synthesis of nucleoside triphosphates other than ATP. The ATP gamma phosphate is transferred to the NDP beta phosphate via a ping-pong mechanism, using a phosphorylated active-site intermediate. The polypeptide is Nucleoside diphosphate kinase (Mannheimia succiniciproducens (strain KCTC 0769BP / MBEL55E)).